The sequence spans 83 residues: Cell division topological specificity factor (83 aa).

The protein belongs to the MinE family.

Prevents the cell division inhibition by proteins MinC and MinD at internal division sites while permitting inhibition at polar sites. This ensures cell division at the proper site by restricting the formation of a division septum at the midpoint of the long axis of the cell. The protein is Cell division topological specificity factor of Pseudoalteromonas atlantica (strain T6c / ATCC BAA-1087).